Here is a 710-residue protein sequence, read N- to C-terminus: Subtilisin-like protease SBT4.8 (710 aa).

Positions 1-23 (MVKRASFCLLSCLIILFLSSVSA) are cleaved as a signal peptide. The propeptide at 24 to 111 (IIYDPQDKQV…VFRSKNYKLQ (88 aa)) is activation peptide. In terms of domain architecture, Inhibitor I9 spans 33 to 110 (VYVVYMGSLP…SVFRSKNYKL (78 aa)). Residues 115–559 (SWDFMGMKEG…AGHVDPIAAI (445 aa)) form the Peptidase S8 domain. Aspartate 143 acts as the Charge relay system in catalysis. Asparagine 174 carries N-linked (GlcNAc...) asparagine glycosylation. Histidine 198 functions as the Charge relay system in the catalytic mechanism. Asparagine 221, asparagine 364, and asparagine 419 each carry an N-linked (GlcNAc...) asparagine glycan. In terms of domain architecture, PA spans 354–414 (KYPLEYGDYL…VLSQDDFDSL (61 aa)). Serine 498 (charge relay system) is an active-site residue. Residues asparagine 535, asparagine 568, asparagine 580, asparagine 618, and asparagine 636 are each glycosylated (N-linked (GlcNAc...) asparagine).

This sequence belongs to the peptidase S8 family. In terms of processing, the C-terminal propeptide is autocleaved.

The protein resides in the secreted. The protein is Subtilisin-like protease SBT4.8 of Arabidopsis thaliana (Mouse-ear cress).